Consider the following 353-residue polypeptide: S-adenosylmethionine decarboxylase proenzyme (353 aa).

Catalysis depends on residues E9 and E12. The active-site Schiff-base intermediate with substrate; via pyruvic acid is the S69. Position 69 is a pyruvic acid (Ser); by autocatalysis (S69). The Proton donor; for catalytic activity role is filled by C83. Catalysis depends on proton acceptor; for processing activity residues S232 and H245.

Belongs to the eukaryotic AdoMetDC family. The cofactor is pyruvate. Is synthesized initially as an inactive proenzyme. Formation of the active enzyme involves a self-maturation process in which the active site pyruvoyl group is generated from an internal serine residue via an autocatalytic post-translational modification. Two non-identical subunits are generated from the proenzyme in this reaction, and the pyruvate is formed at the N-terminus of the alpha chain, which is derived from the carboxyl end of the proenzyme. The post-translation cleavage follows an unusual pathway, termed non-hydrolytic serinolysis, in which the side chain hydroxyl group of the serine supplies its oxygen atom to form the C-terminus of the beta chain, while the remainder of the serine residue undergoes an oxidative deamination to produce ammonia and the pyruvoyl group blocking the N-terminus of the alpha chain.

The catalysed reaction is S-adenosyl-L-methionine + H(+) = S-adenosyl 3-(methylsulfanyl)propylamine + CO2. It participates in amine and polyamine biosynthesis; S-adenosylmethioninamine biosynthesis; S-adenosylmethioninamine from S-adenosyl-L-methionine: step 1/1. This Vicia faba (Broad bean) protein is S-adenosylmethionine decarboxylase proenzyme (SAMDC).